An 88-amino-acid chain; its full sequence is Small ribosomal subunit protein bS20 (88 aa).

The protein belongs to the bacterial ribosomal protein bS20 family.

Its function is as follows. Binds directly to 16S ribosomal RNA. The polypeptide is Small ribosomal subunit protein bS20 (Oenococcus oeni (strain ATCC BAA-331 / PSU-1)).